Consider the following 343-residue polypeptide: Palmitoyltransferase ZDHHC4 (343 aa).

Residues Met-1 to Asp-2 are Lumenal-facing. The helical transmembrane segment at Phe-3–Ile-23 threads the bilayer. Topologically, residues Phe-24–Ala-67 are cytoplasmic. Residues Phe-68–Phe-88 form a helical membrane-spanning segment. At Ser-89 to Glu-95 the chain is on the lumenal side. Residues Phe-96 to Thr-116 form a helical membrane-spanning segment. Topologically, residues Leu-117–Tyr-193 are cytoplasmic. Residues Ser-149–Leu-199 enclose the DHHC domain. Cys-179 (S-palmitoyl cysteine intermediate) is an active-site residue. A helical transmembrane segment spans residues Phe-194 to Ala-214. At Phe-215–Arg-255 the chain is on the lumenal side. The helical transmembrane segment at Ile-256 to Phe-276 threads the bilayer. At Ala-277–Arg-343 the chain is on the cytoplasmic side. Residues Lys-340 to Arg-343 carry the Di-lysine motif motif.

It belongs to the DHHC palmitoyltransferase family. In terms of assembly, interacts with CPT1A.

The protein resides in the endoplasmic reticulum membrane. It is found in the golgi apparatus membrane. Its subcellular location is the cell membrane. The enzyme catalyses L-cysteinyl-[protein] + hexadecanoyl-CoA = S-hexadecanoyl-L-cysteinyl-[protein] + CoA. Palmitoyltransferase that could catalyze the addition of palmitate onto protein substrates including the D(2) dopamine receptor DRD2, GSK3B or MAVS. Mediates GSK3B palmitoylation to prevent its AKT1-mediated phosphorylation leading to activation of the STAT3 signaling pathway. Also catalyzes MAVS palmitoylation which promotes its stabilization and activation by inhibiting 'Lys-48'- but facilitating 'Lys-63'-linked ubiquitination. In Rattus norvegicus (Rat), this protein is Palmitoyltransferase ZDHHC4.